The following is a 176-amino-acid chain: MARRLPKPTLQGRLEADFPDSPLLPKFQELNQNNLPNDVFREAQRSYLVFLTSQFCYEEYVQRTFGVPRRQRAIDKRQRASVAGAGAHAHLGGSSATPVQQAQAAASAGTGALASSAPSTAVAQSATPSVSSSISSLRAATSGATAAASAAAAVDTGSGGGGQPHDTAPRGARKKQ.

Disordered regions lie at residues 75–109 (DKRQ…ASAG) and 148–176 (ASAA…RKKQ). A compositionally biased stretch (low complexity) spans 80 to 109 (ASVAGAGAHAHLGGSSATPVQQAQAAASAG).

Belongs to the herpesviridae small capsomere-interacting protein family. As to quaternary structure, interacts with the major capsid protein/MCP.

It is found in the virion. The protein resides in the host nucleus. Its function is as follows. Participates in the assembly of the infectious particles by decorating the outer surface of the capsid shell and thus forming a layer between the capsid and the tegument. Complexes composed of the major capsid protein and small capsomere-interacting protein/SCP assemble together in the host cytoplasm and are translocated to the nucleus, where they accumulate and participate in capsid assembly. In Epstein-Barr virus (strain B95-8) (HHV-4), this protein is Small capsomere-interacting protein.